The primary structure comprises 141 residues: Putative pre-16S rRNA nuclease (141 aa).

The protein belongs to the YqgF nuclease family.

The protein localises to the cytoplasm. Its function is as follows. Could be a nuclease involved in processing of the 5'-end of pre-16S rRNA. This Coxiella burnetii (strain RSA 331 / Henzerling II) protein is Putative pre-16S rRNA nuclease.